Here is a 1414-residue protein sequence, read N- to C-terminus: Phenyloxazoline synthase MbtB (1414 aa).

A Carrier 1 domain is found at 5-78; it reads TACSEIIRAE…AWSQLVSAGT (74 aa). The residue at position 39 (Ser-39) is an O-(pantetheine 4'-phosphoryl)serine. The condensation/cyclization stretch occupies residues 96–394; it reads EGEPFPLAPM…SSLLLDVDLT (299 aa). An adenylation region spans residues 579 to 975; the sequence is SYAQLRDQAS…RLPGVHAAAA (397 aa). Residues 1057 to 1135 form the Carrier 2 domain; it reads APRTVLQRAL…ALAQLLTGRE (79 aa). Ser-1094 bears the O-(pantetheine 4'-phosphoryl)serine mark. The thioesterase stretch occupies residues 1188-1413; the sequence is GAVLVFPHAG…AVARMVSADV (226 aa).

The protein belongs to the ATP-dependent AMP-binding enzyme family. MbtB subfamily. The cofactor is pantetheine 4'-phosphate. 4'-phosphopantetheine is transferred from CoA to a specific serine in each of the two carrier protein domains, leading to their activation from apo to holo forms.

Its pathway is siderophore biosynthesis; mycobactin biosynthesis. Its function is as follows. Involved in the initial steps of the mycobactin biosynthetic pathway. Putatively couples activated salicylic acid with serine or threonine and cyclizes this precursor to the hydroxyphenyloxazoline ring system present in this class of siderophores. The chain is Phenyloxazoline synthase MbtB (mbtB) from Mycobacterium bovis (strain ATCC BAA-935 / AF2122/97).